A 174-amino-acid polypeptide reads, in one-letter code: DNA-directed RNA polymerase IV subunit 7 (174 aa).

Belongs to the eukaryotic RPB7/RPC8 RNA polymerase subunit family. As to quaternary structure, component of the RNA polymerase IV complex. Interacts with NRPD1.

The protein localises to the nucleus. In terms of biological role, DNA-dependent RNA polymerase catalyzes the transcription of DNA into RNA using the four ribonucleoside triphosphates as substrates. Component of RNA polymerase IV which mediates 24-nt short-interfering RNAs (siRNA) accumulation. Implicated in siRNA-directed heterochromatin formation through the action of DCL3 and AGO4, and subsequent DNA methylation-dependent silencing of targeted sequences. Essential component of a self-reinforcing loop coupling de novo DNA methylation to siRNA production. Required for intercellular but not intracellular RNA interference (RNAi) leading to systemic post-transcriptional gene silencing. Involved in the maintenance of post-transcriptional RNA silencing. The protein is DNA-directed RNA polymerase IV subunit 7 (NRPD7) of Arabidopsis thaliana (Mouse-ear cress).